Consider the following 135-residue polypeptide: UPF0201 protein TON_1346 (135 aa).

The protein belongs to the UPF0201 family.

The sequence is that of UPF0201 protein TON_1346 from Thermococcus onnurineus (strain NA1).